The sequence spans 134 residues: MENKKTIYFLCTGNSCRSQMAEAWGKKYLGDKWNVLSAGIEAHGVNPNAIKAMKEVDIDITDQTSDIIDRDILDKADLVVTLCGHANDVCPTTPPHVKRVHWGFDDPAGQEWSVFQRVRDEIGARIKKYAETGE.

Active-site nucleophile residues include Cys11, Cys83, and Cys90. 2 cysteine pairs are disulfide-bonded: Cys11-Cys83 and Cys83-Cys90.

This sequence belongs to the low molecular weight phosphotyrosine protein phosphatase family. Thioredoxin-coupled ArsC subfamily.

It localises to the cytoplasm. The catalysed reaction is arsenate + [thioredoxin]-dithiol + H(+) = arsenite + [thioredoxin]-disulfide + H2O. Its function is as follows. Catalyzes the reduction of arsenate [As(V)] to arsenite [As(III)]. In Bacillus cereus (strain ATCC 10987 / NRS 248), this protein is Arsenate reductase 1.